Reading from the N-terminus, the 450-residue chain is Probable ECA polymerase (450 aa).

Helical transmembrane passes span 6-26, 37-57, 63-83, 120-140, 155-175, 181-201, 207-227, 228-248, 341-361, 378-398, and 410-430; these read FSGL…LTWF, VFFS…TSVL, VGVA…CFYA, LMGI…FLLF, GVAL…IYFL, AWLF…MIVG, IIIA…ISLW, MLVA…LKRY, LVVM…GLII, YKAA…IVLA, and VFFL…FWLF.

This sequence belongs to the WzyE family. As to quaternary structure, probably part of a complex composed of WzxE, WzyE and WzzE.

It is found in the cell inner membrane. Its pathway is bacterial outer membrane biogenesis; enterobacterial common antigen biosynthesis. Its function is as follows. Probably involved in the polymerization of enterobacterial common antigen (ECA) trisaccharide repeat units. The polypeptide is Probable ECA polymerase (Citrobacter koseri (strain ATCC BAA-895 / CDC 4225-83 / SGSC4696)).